The primary structure comprises 82 residues: UPF0180 protein BC_1394 (82 aa).

This sequence belongs to the UPF0180 family.

This chain is UPF0180 protein BC_1394, found in Bacillus cereus (strain ATCC 14579 / DSM 31 / CCUG 7414 / JCM 2152 / NBRC 15305 / NCIMB 9373 / NCTC 2599 / NRRL B-3711).